Here is a 274-residue protein sequence, read N- to C-terminus: Penicillin-insensitive murein endopeptidase (274 aa).

The signal sequence occupies residues 1–19; that stretch reads MKKTALALLALLVSSASLA. 3 cysteine pairs are disulfide-bonded: Cys44/Cys265, Cys187/Cys235, and Cys216/Cys223. Zn(2+) is bound by residues His110, His113, Asp120, Asp147, His150, and His211. The disordered stretch occupies residues 225 to 274; it reads DQPLPPPGDGCGAELQSWFEPPEPGTTKPEKKTPPPLPPSCQALLDEHVL.

Belongs to the peptidase M74 family. As to quaternary structure, dimer. It depends on Zn(2+) as a cofactor.

The protein localises to the periplasm. Its function is as follows. Murein endopeptidase that cleaves the D-alanyl-meso-2,6-diamino-pimelyl amide bond that connects peptidoglycan strands. Likely plays a role in the removal of murein from the sacculus. The chain is Penicillin-insensitive murein endopeptidase from Citrobacter koseri (strain ATCC BAA-895 / CDC 4225-83 / SGSC4696).